Consider the following 407-residue polypeptide: D-3-phosphoglycerate dehydrogenase (407 aa).

Residues 161–162 (HI), D181, 238–240 (ASR), and D264 each bind NAD(+). R240 is a catalytic residue. Residue E269 is part of the active site. The Proton donor role is filled by H292. 292-295 (HIGG) lines the NAD(+) pocket. In terms of domain architecture, ACT spans 340-407 (RILNIHNNKP…PNSIKTRVLY (68 aa)).

The protein belongs to the D-isomer specific 2-hydroxyacid dehydrogenase family.

The catalysed reaction is (2R)-3-phosphoglycerate + NAD(+) = 3-phosphooxypyruvate + NADH + H(+). It carries out the reaction (R)-2-hydroxyglutarate + NAD(+) = 2-oxoglutarate + NADH + H(+). It functions in the pathway amino-acid biosynthesis; L-serine biosynthesis; L-serine from 3-phospho-D-glycerate: step 1/3. Its function is as follows. Catalyzes the reversible oxidation of 3-phospho-D-glycerate to 3-phosphonooxypyruvate, the first step of the phosphorylated L-serine biosynthesis pathway. Also catalyzes the reversible oxidation of 2-hydroxyglutarate to 2-oxoglutarate. The polypeptide is D-3-phosphoglycerate dehydrogenase (serA) (Dictyostelium discoideum (Social amoeba)).